We begin with the raw amino-acid sequence, 377 residues long: Putative glutamate--cysteine ligase 2 (377 aa).

This sequence belongs to the glutamate--cysteine ligase type 2 family. YbdK subfamily.

It catalyses the reaction L-cysteine + L-glutamate + ATP = gamma-L-glutamyl-L-cysteine + ADP + phosphate + H(+). Functionally, ATP-dependent carboxylate-amine ligase which exhibits weak glutamate--cysteine ligase activity. This Pseudomonas aeruginosa (strain ATCC 15692 / DSM 22644 / CIP 104116 / JCM 14847 / LMG 12228 / 1C / PRS 101 / PAO1) protein is Putative glutamate--cysteine ligase 2.